We begin with the raw amino-acid sequence, 270 residues long: Putative phosphoenolpyruvate synthase regulatory protein (270 aa).

Residue 150–157 (GVSRCGKT) participates in ADP binding.

The protein belongs to the pyruvate, phosphate/water dikinase regulatory protein family. PSRP subfamily.

It carries out the reaction [pyruvate, water dikinase] + ADP = [pyruvate, water dikinase]-phosphate + AMP + H(+). The enzyme catalyses [pyruvate, water dikinase]-phosphate + phosphate + H(+) = [pyruvate, water dikinase] + diphosphate. Its function is as follows. Bifunctional serine/threonine kinase and phosphorylase involved in the regulation of the phosphoenolpyruvate synthase (PEPS) by catalyzing its phosphorylation/dephosphorylation. In Shewanella baltica (strain OS223), this protein is Putative phosphoenolpyruvate synthase regulatory protein.